A 737-amino-acid polypeptide reads, in one-letter code: Procollagen-lysine,2-oxoglutarate 5-dioxygenase 2 (737 aa).

The first 25 residues, methionine 1–glycine 25, serve as a signal peptide directing secretion. Asparagine 63, asparagine 209, and asparagine 297 each carry an N-linked (GlcNAc...) asparagine glycan. Threonine 320 carries the phosphothreonine modification. Residue tyrosine 323 is modified to Phosphotyrosine. N-linked (GlcNAc...) asparagine glycosylation is found at asparagine 365 and asparagine 522. Residues lysine 644 to proline 737 form the Fe2OG dioxygenase domain. Residues histidine 666 and aspartate 668 each contribute to the Fe cation site. Asparagine 696 carries N-linked (GlcNAc...) asparagine glycosylation. An N6-succinyllysine modification is found at lysine 704. Residue histidine 718 coordinates Fe cation. N-linked (GlcNAc...) asparagine glycosylation occurs at asparagine 725. The active site involves arginine 728.

Homodimer. Fe(2+) serves as cofactor. It depends on L-ascorbate as a cofactor. As to expression, highly expressed in pancreas and muscle. Isoform 1 and isoform 2 are expressed in the majority of the examined cell types. Isoform 2 is specifically expressed in skin, lung, dura and aorta.

The protein localises to the rough endoplasmic reticulum membrane. It carries out the reaction L-lysyl-[collagen] + 2-oxoglutarate + O2 = (5R)-5-hydroxy-L-lysyl-[collagen] + succinate + CO2. Forms hydroxylysine residues in -Xaa-Lys-Gly- sequences in collagens. These hydroxylysines serve as sites of attachment for carbohydrate units and are essential for the stability of the intermolecular collagen cross-links. The chain is Procollagen-lysine,2-oxoglutarate 5-dioxygenase 2 from Homo sapiens (Human).